The chain runs to 141 residues: Large ribosomal subunit protein uL11 (141 aa).

The protein belongs to the universal ribosomal protein uL11 family. As to quaternary structure, part of the ribosomal stalk of the 50S ribosomal subunit. Interacts with L10 and the large rRNA to form the base of the stalk. L10 forms an elongated spine to which L12 dimers bind in a sequential fashion forming a multimeric L10(L12)X complex. One or more lysine residues are methylated.

Forms part of the ribosomal stalk which helps the ribosome interact with GTP-bound translation factors. The protein is Large ribosomal subunit protein uL11 of Trichodesmium erythraeum (strain IMS101).